The following is a 194-amino-acid chain: NADH-quinone oxidoreductase subunit B (194 aa).

Residues C72, C73, C137, and C167 each contribute to the [4Fe-4S] cluster site.

This sequence belongs to the complex I 20 kDa subunit family. NDH-1 is composed of 14 different subunits. Subunits NuoB, C, D, E, F, and G constitute the peripheral sector of the complex. [4Fe-4S] cluster is required as a cofactor.

The protein localises to the cell inner membrane. It carries out the reaction a quinone + NADH + 5 H(+)(in) = a quinol + NAD(+) + 4 H(+)(out). NDH-1 shuttles electrons from NADH, via FMN and iron-sulfur (Fe-S) centers, to quinones in the respiratory chain. Couples the redox reaction to proton translocation (for every two electrons transferred, four hydrogen ions are translocated across the cytoplasmic membrane), and thus conserves the redox energy in a proton gradient. This Granulibacter bethesdensis (strain ATCC BAA-1260 / CGDNIH1) protein is NADH-quinone oxidoreductase subunit B.